A 601-amino-acid polypeptide reads, in one-letter code: Secretogranin-2 (601 aa).

A signal peptide spans 1-30; sequence MSSQRNYCLAGCLSSCILVILMSFSDAASF. Residues 89–109 form a disordered region; it reads EQKDTQALSTDTAKSPTSDDE. Over residues 93–104 the composition is skewed to polar residues; the sequence is TQALSTDTAKSP. At Tyr-151 the chain carries Sulfotyrosine. Positions 258–273 are enriched in basic and acidic residues; it reads VESQTQEELKESKEEV. The segment at 258–307 is disordered; sequence VESQTQEELKESKEEVEKTDDMEDEIKRSGLLGLQDEEPEKDTKEQESEN.

It belongs to the chromogranin/secretogranin protein family.

The protein localises to the secreted. In terms of biological role, neuroendocrine protein of the granin family that regulates the biogenesis of secretory granules. The chain is Secretogranin-2 from Pelophylax ridibundus (Marsh frog).